A 396-amino-acid chain; its full sequence is Elongation factor Tu (396 aa).

Positions 10 to 206 constitute a tr-type G domain; the sequence is KPHVNVGTIG…ALDTYIPTPE (197 aa). Positions 19–26 are G1; sequence GHVDHGKT. 19–26 is a binding site for GTP; sequence GHVDHGKT. Thr-26 is a Mg(2+) binding site. Residues 60-64 are G2; sequence GITIN. The G3 stretch occupies residues 81 to 84; it reads DCPG. Residues 81–85 and 136–139 contribute to the GTP site; these read DCPGH and NKAD. Positions 136 to 139 are G4; the sequence is NKAD. A G5 region spans residues 174 to 176; sequence SAK.

Belongs to the TRAFAC class translation factor GTPase superfamily. Classic translation factor GTPase family. EF-Tu/EF-1A subfamily. As to quaternary structure, monomer.

The protein resides in the cytoplasm. The catalysed reaction is GTP + H2O = GDP + phosphate + H(+). Its function is as follows. GTP hydrolase that promotes the GTP-dependent binding of aminoacyl-tRNA to the A-site of ribosomes during protein biosynthesis. The sequence is that of Elongation factor Tu from Bordetella avium (strain 197N).